Here is a 295-residue protein sequence, read N- to C-terminus: Methionine aminopeptidase (295 aa).

Position 62 (His62) interacts with substrate. Residues Asp82, Asp93, and His153 each contribute to the a divalent metal cation site. His161 lines the substrate pocket. Positions 187 and 280 each coordinate a divalent metal cation.

This sequence belongs to the peptidase M24A family. Methionine aminopeptidase archaeal type 2 subfamily. In terms of assembly, monomer. Co(2+) is required as a cofactor. Requires Zn(2+) as cofactor. The cofactor is Mn(2+). Fe(2+) serves as cofactor.

It carries out the reaction Release of N-terminal amino acids, preferentially methionine, from peptides and arylamides.. In terms of biological role, removes the N-terminal methionine from nascent proteins. The N-terminal methionine is often cleaved when the second residue in the primary sequence is small and uncharged (Met-Ala-, Cys, Gly, Pro, Ser, Thr, or Val). This is Methionine aminopeptidase from Pyrococcus horikoshii (strain ATCC 700860 / DSM 12428 / JCM 9974 / NBRC 100139 / OT-3).